The primary structure comprises 376 residues: Putative glutamate--cysteine ligase 2 (376 aa).

The protein belongs to the glutamate--cysteine ligase type 2 family. YbdK subfamily.

It carries out the reaction L-cysteine + L-glutamate + ATP = gamma-L-glutamyl-L-cysteine + ADP + phosphate + H(+). Functionally, ATP-dependent carboxylate-amine ligase which exhibits weak glutamate--cysteine ligase activity. The sequence is that of Putative glutamate--cysteine ligase 2 from Corynebacterium glutamicum (strain R).